Reading from the N-terminus, the 418-residue chain is Putative ion-transport protein YfeO (418 aa).

12 helical membrane passes run 10 to 30, 54 to 74, 99 to 119, 120 to 140, 149 to 169, 186 to 206, 223 to 243, 258 to 278, 300 to 320, 322 to 342, 343 to 363, and 371 to 391; these read LLLSLPAVAIGIASSLILIMV, DSPLWIIGVLTLTGIAVGLVI, ALPGLIVALILGLAGGVSLGP, EHPIMTVNIALAVAIGARLLP, ILASAGTIGALFGTPVAAALI, LFAPLMAAAAGALTTGLFFHP, ILSGAIVAAIAIAAGMVAVWC, VFVLGIGGLILGILGVIGGPV, DYFLLAVIKLAALVVAAASGF, GGRIFPAVFVGVALGLMLHEH, VPAVPAAITVSCAILGIVLVV, and LFMAAVVVPNTTLLPLLCIVM.

It belongs to the chloride channel (TC 2.A.49) family.

It is found in the cell membrane. This chain is Putative ion-transport protein YfeO, found in Escherichia coli O45:K1 (strain S88 / ExPEC).